Reading from the N-terminus, the 186-residue chain is UPF0301 protein Swoo_1337 (186 aa).

This sequence belongs to the UPF0301 (AlgH) family.

This Shewanella woodyi (strain ATCC 51908 / MS32) protein is UPF0301 protein Swoo_1337.